The following is a 288-amino-acid chain: tRNA pseudouridine synthase A (288 aa).

Aspartate 59 acts as the Nucleophile in catalysis. A substrate-binding site is contributed by tyrosine 134.

Belongs to the tRNA pseudouridine synthase TruA family. As to quaternary structure, homodimer.

It carries out the reaction uridine(38/39/40) in tRNA = pseudouridine(38/39/40) in tRNA. In terms of biological role, formation of pseudouridine at positions 38, 39 and 40 in the anticodon stem and loop of transfer RNAs. This is tRNA pseudouridine synthase A from Leifsonia xyli subsp. xyli (strain CTCB07).